Reading from the N-terminus, the 459-residue chain is Bifunctional protein GlmU (459 aa).

The tract at residues 1-230 (MSNRFAVILA…FDETLGVNDR (230 aa)) is pyrophosphorylase. Residues 9 to 12 (LAAG), Lys23, Gln73, and 78 to 79 (GT) contribute to the UDP-N-acetyl-alpha-D-glucosamine site. Residue Asp103 coordinates Mg(2+). Gly140, Glu155, Asn170, and Asn228 together coordinate UDP-N-acetyl-alpha-D-glucosamine. Asn228 contributes to the Mg(2+) binding site. Residues 231–251 (VALSQAEIIMKNRINRKNMVN) form a linker region. The segment at 252–459 (GVTIIDPSNT…VDQLLNKKKS (208 aa)) is N-acetyltransferase. UDP-N-acetyl-alpha-D-glucosamine-binding residues include Arg333 and Lys351. The Proton acceptor role is filled by His363. Tyr366 and Asn377 together coordinate UDP-N-acetyl-alpha-D-glucosamine. Residues 386–387 (NY), Ala423, and Arg440 contribute to the acetyl-CoA site.

It in the N-terminal section; belongs to the N-acetylglucosamine-1-phosphate uridyltransferase family. This sequence in the C-terminal section; belongs to the transferase hexapeptide repeat family. In terms of assembly, homotrimer. The cofactor is Mg(2+).

The protein resides in the cytoplasm. It carries out the reaction alpha-D-glucosamine 1-phosphate + acetyl-CoA = N-acetyl-alpha-D-glucosamine 1-phosphate + CoA + H(+). It catalyses the reaction N-acetyl-alpha-D-glucosamine 1-phosphate + UTP + H(+) = UDP-N-acetyl-alpha-D-glucosamine + diphosphate. The protein operates within nucleotide-sugar biosynthesis; UDP-N-acetyl-alpha-D-glucosamine biosynthesis; N-acetyl-alpha-D-glucosamine 1-phosphate from alpha-D-glucosamine 6-phosphate (route II): step 2/2. It functions in the pathway nucleotide-sugar biosynthesis; UDP-N-acetyl-alpha-D-glucosamine biosynthesis; UDP-N-acetyl-alpha-D-glucosamine from N-acetyl-alpha-D-glucosamine 1-phosphate: step 1/1. It participates in bacterial outer membrane biogenesis; LPS lipid A biosynthesis. In terms of biological role, catalyzes the last two sequential reactions in the de novo biosynthetic pathway for UDP-N-acetylglucosamine (UDP-GlcNAc). The C-terminal domain catalyzes the transfer of acetyl group from acetyl coenzyme A to glucosamine-1-phosphate (GlcN-1-P) to produce N-acetylglucosamine-1-phosphate (GlcNAc-1-P), which is converted into UDP-GlcNAc by the transfer of uridine 5-monophosphate (from uridine 5-triphosphate), a reaction catalyzed by the N-terminal domain. The protein is Bifunctional protein GlmU of Bacillus cereus (strain ATCC 14579 / DSM 31 / CCUG 7414 / JCM 2152 / NBRC 15305 / NCIMB 9373 / NCTC 2599 / NRRL B-3711).